The chain runs to 137 residues: Histone H2B (137 aa).

The segment covering 1–10 (MPPKPADKKP) has biased composition (basic and acidic residues). Residues 1-45 (MPPKPADKKPASKAPATASKAPEKKDAGKKTAASGDKKKRTKARK) are disordered. N6-acetyllysine; alternate is present on residues K8 and K9. Glycyl lysine isopeptide (Lys-Gly) (interchain with G-Cter in SUMO); alternate cross-links involve residues K8 and K9. S12 is modified (phosphoserine). K13 carries the N6-acetyllysine modification. At K24 the chain carries N6-acetyllysine; alternate. A Glycyl lysine isopeptide (Lys-Gly) (interchain with G-Cter in SUMO); alternate cross-link involves residue K24. K25 participates in a covalent cross-link: Glycyl lysine isopeptide (Lys-Gly) (interchain with G-Cter in SUMO). K131 participates in a covalent cross-link: Glycyl lysine isopeptide (Lys-Gly) (interchain with G-Cter in ubiquitin).

Belongs to the histone H2B family. The nucleosome is a histone octamer containing two molecules each of H2A, H2B, H3 and H4 assembled in one H3-H4 heterotetramer and two H2A-H2B heterodimers. The octamer wraps approximately 147 bp of DNA. In terms of processing, monoubiquitinated by the ubc-2-bre-1 complex to form H2BK123ub1. H2BK123ub1 gives a specific tag for epigenetic transcriptional activation and is also prerequisite for H3K4me and H3K79me formation. H2BK123ub1 also modulates the formation of double-strand breaks during meiosis and is a prerequisite for DNA-damage checkpoint activation. Post-translationally, phosphorylated by ste-20 to form H2BS10ph during progression through meiotic prophase. May be correlated with chromosome condensation. Acetylated by gcn-5 to form H2BK11ac and H2BK16ac. H2BK16ac can also be formed by esa-1. Acetylation of N-terminal lysines and particularly formation of H2BK11acK16ac has a positive effect on transcription. In terms of processing, sumoylation to form H2BK6su or H2BK7su, and probably also H2BK16su or H2BK17su, occurs preferentially near the telomeres and represses gene transcription.

It localises to the nucleus. Its subcellular location is the chromosome. Its function is as follows. Core component of nucleosome. Nucleosomes wrap and compact DNA into chromatin, limiting DNA accessibility to the cellular machineries which require DNA as a template. Histones thereby play a central role in transcription regulation, DNA repair, DNA replication and chromosomal stability. DNA accessibility is regulated via a complex set of post-translational modifications of histones, also called histone code, and nucleosome remodeling. The protein is Histone H2B (hh2b) of Neurospora crassa (strain ATCC 24698 / 74-OR23-1A / CBS 708.71 / DSM 1257 / FGSC 987).